Here is a 322-residue protein sequence, read N- to C-terminus: Digestive cysteine proteinase 1 (322 aa).

Residues 1-16 (MKVVALFLFGLALAAA) form the signal peptide. Positions 17-105 (NPSWEEFKGK…VFTSTDAAPE (89 aa)) are cleaved as a propeptide — activation peptide. Disulfide bonds link cysteine 126–cysteine 170, cysteine 160–cysteine 203, and cysteine 262–cysteine 311. The active site involves cysteine 129. Catalysis depends on residues histidine 269 and asparagine 289.

Belongs to the peptidase C1 family.

With respect to regulation, inhibited by E-64, antipain, leupeptin, heavy metal ions, iodoacetic acid, dithionitrobenzene, p-hydroxymercuri-benzoate; activated by mercaptoethanol and dithiothreitol. This is Digestive cysteine proteinase 1 (LCP1) from Homarus americanus (American lobster).